A 268-amino-acid polypeptide reads, in one-letter code: uncharacterized protein (268 aa).

The HTH iclR-type domain occupies 15–77; it reads NQALIRGLRL…NAAGSYRLTI (63 aa). The segment at residues 37 to 56 is a DNA-binding region (H-T-H motif); that stretch reads LAKLAELANLNKSTAHRLLQ. Residues 92 to 265 form the IclR-ED domain; that stretch reads IIHVASPYLE…AEQISLELGY (174 aa).

This is an uncharacterized protein from Haemophilus influenzae (strain ATCC 51907 / DSM 11121 / KW20 / Rd).